The primary structure comprises 450 residues: Akuammiline synthase 2 (450 aa).

The active-site Proton acceptor is the histidine 154. The short motif at 218-225 is the Nuclear localization signal element; that stretch reads MRRFVFDA. Aspartate 376 acts as the Proton acceptor in catalysis.

It belongs to the plant acyltransferase family. Monomer.

It localises to the cytoplasm. It is found in the nucleus. The enzyme catalyses rhazimol + acetyl-CoA = akuammiline + CoA + H(+). It functions in the pathway alkaloid biosynthesis. In terms of biological role, acyltransferase involved in the biosynthesis of akuammilan monoterpene indole alkaloids (MIAs) natural products, components with various biological properties such as antidiabetic, antibacterial, anti-inflammatory, anticancer, and antimalarial activities. Catalyzes the conversion of rhazimol to akuammiline. The sequence is that of Akuammiline synthase 2 from Alstonia scholaris (Dogbane).